Reading from the N-terminus, the 397-residue chain is Tryptophan synthase beta chain 1 (397 aa).

Lys-94 carries the N6-(pyridoxal phosphate)lysine modification.

It belongs to the TrpB family. As to quaternary structure, tetramer of two alpha and two beta chains. The cofactor is pyridoxal 5'-phosphate.

It carries out the reaction (1S,2R)-1-C-(indol-3-yl)glycerol 3-phosphate + L-serine = D-glyceraldehyde 3-phosphate + L-tryptophan + H2O. It functions in the pathway amino-acid biosynthesis; L-tryptophan biosynthesis; L-tryptophan from chorismate: step 5/5. Functionally, the beta subunit is responsible for the synthesis of L-tryptophan from indole and L-serine. This chain is Tryptophan synthase beta chain 1 (trpB1), found in Archaeoglobus fulgidus (strain ATCC 49558 / DSM 4304 / JCM 9628 / NBRC 100126 / VC-16).